Reading from the N-terminus, the 556-residue chain is Undecaprenyl phosphate-alpha-4-amino-4-deoxy-L-arabinose arabinosyl transferase (556 aa).

10 helical membrane passes run 88 to 108, 116 to 136, 179 to 199, 207 to 227, 258 to 278, 296 to 316, 319 to 339, 355 to 375, 384 to 404, and 410 to 430; these read FASVFSTALSALLVFWLAMML, LLAATIYLTSLLVYGIGTYSV, FMTKGFLALALPVISVLPVAL, LLLFGPLAIVVAVLLSAPWAL, APFWYYLPFLIVGTFPWLALL, FFLLCWMVMPLLFFSIAKGKL, YILPCFAPLALLMAAWISGLA, IVFGGVLGLAVAALGLGIIVP, LTIISGIVCFIGWIAFAAVSL, and WGYLVAGCPLFLALLVGGSIP.

It belongs to the glycosyltransferase 83 family.

The protein resides in the cell inner membrane. It catalyses the reaction 4-amino-4-deoxy-alpha-L-arabinopyranosyl di-trans,octa-cis-undecaprenyl phosphate + lipid IVA = lipid IIA + di-trans,octa-cis-undecaprenyl phosphate.. The protein operates within lipopolysaccharide metabolism; 4-amino-4-deoxy-beta-L-arabinose-lipid A biosynthesis. Catalyzes the transfer of the L-Ara4N moiety of the glycolipid undecaprenyl phosphate-alpha-L-Ara4N to lipid A. The modified arabinose is attached to lipid A and is required for resistance to polymyxin and cationic antimicrobial peptides. The chain is Undecaprenyl phosphate-alpha-4-amino-4-deoxy-L-arabinose arabinosyl transferase from Pectobacterium atrosepticum (strain SCRI 1043 / ATCC BAA-672) (Erwinia carotovora subsp. atroseptica).